Consider the following 623-residue polypeptide: V-type proton ATPase catalytic subunit A (623 aa).

252 to 259 serves as a coordination point for ATP; the sequence is GAFGCGKT.

It belongs to the ATPase alpha/beta chains family. V-ATPase is a heteromultimeric enzyme composed of a peripheral catalytic V1 complex (components A to H) attached to an integral membrane V0 proton pore complex (components: a, c, c'', d and e). Binds to the deubiquitinating enzyme AMSH3.

It localises to the vacuole membrane. The catalysed reaction is ATP + H2O + 4 H(+)(in) = ADP + phosphate + 5 H(+)(out). Its function is as follows. Catalytic subunit of the peripheral V1 complex of vacuolar ATPase. V-ATPase vacuolar ATPase is responsible for acidifying a variety of intracellular compartments in eukaryotic cells. This Arabidopsis thaliana (Mouse-ear cress) protein is V-type proton ATPase catalytic subunit A (VHA-A).